Here is a 126-residue protein sequence, read N- to C-terminus: C-type natriuretic peptide (126 aa).

The N-terminal stretch at 1-23 is a signal peptide; the sequence is MHLSQLLACALLLTLLSLRPSEA. Positions 19-72 are disordered; it reads RPSEAKPGAPPKVPRTPPGEEVAEPQAAGGGQKKGDKTPGGGGANLKGDRSRLL. Residues 24 to 73 constitute a propeptide that is removed on maturation; the sequence is KPGAPPKVPRTPPGEEVAEPQAAGGGQKKGDKTPGGGGANLKGDRSRLLR. Residues 26-35 show a composition bias toward pro residues; sequence GAPPKVPRTP. Over residues 46 to 63 the composition is skewed to gly residues; the sequence is AGGGQKKGDKTPGGGGAN. Cysteines 110 and 126 form a disulfide.

Belongs to the natriuretic peptide family. Post-translationally, degraded by IDE (in vitro).

It localises to the secreted. In terms of biological role, hormone which plays a role in endochondral ossification through regulation of cartilaginous growth plate chondrocytes proliferation and differentiation. May also be vasoactive and natriuretic. Acts by specifically binding and stimulating NPR2 to produce cGMP. Binds the clearance receptor NPR3. This Sus scrofa (Pig) protein is C-type natriuretic peptide (NPPC).